A 697-amino-acid chain; its full sequence is Polyribonucleotide nucleotidyltransferase (697 aa).

Mg(2+) contacts are provided by Asp489 and Asp495. The KH domain maps to 556-615; that stretch reads PRIETIKIKPDKIREVIGSGGKVIRGITEATGVKIEIQDDGTINIASADPEATKKAIAMI. Residues 625–693 form the S1 motif domain; sequence GKTYKGRIVK…RSGRVKLSRK (69 aa).

This sequence belongs to the polyribonucleotide nucleotidyltransferase family. The cofactor is Mg(2+).

Its subcellular location is the cytoplasm. The catalysed reaction is RNA(n+1) + phosphate = RNA(n) + a ribonucleoside 5'-diphosphate. Functionally, involved in mRNA degradation. Catalyzes the phosphorolysis of single-stranded polyribonucleotides processively in the 3'- to 5'-direction. This chain is Polyribonucleotide nucleotidyltransferase, found in Bdellovibrio bacteriovorus (strain ATCC 15356 / DSM 50701 / NCIMB 9529 / HD100).